A 138-amino-acid chain; its full sequence is Large ribosomal subunit protein uL16 (138 aa).

The span at 1–13 (MLQPKRRKYRKEQ) shows a compositional bias: basic residues. Residues 1-20 (MLQPKRRKYRKEQKGRNTGI) form a disordered region.

Belongs to the universal ribosomal protein uL16 family. In terms of assembly, part of the 50S ribosomal subunit.

Binds 23S rRNA and is also seen to make contacts with the A and possibly P site tRNAs. In Ralstonia nicotianae (strain ATCC BAA-1114 / GMI1000) (Ralstonia solanacearum), this protein is Large ribosomal subunit protein uL16.